Reading from the N-terminus, the 1820-residue chain is Cation channel sperm-associated targeting subunit tau (1820 aa).

The region spanning 87–222 (DSEELEITQE…QKGCFIEEVQ (136 aa)) is the C2 domain. Disordered regions lie at residues 360-383 (SEET…ELEN), 403-443 (LLDN…TEVH), 695-722 (EVSM…SSME), and 838-857 (SSTK…SGSS). A compositionally biased stretch (polar residues) spans 415-443 (PTLNQSDQDNSTADASKNDESTPSPTEVH).

As to quaternary structure, component of the CatSper complex or CatSpermasome composed of the core pore-forming members CATSPER1, CATSPER2, CATSPER3 and CATSPER4 as well as auxiliary members CATSPERB, CATSPERG, CATSPERD, CATSPERE, CATSPERZ, C2CD6/CATSPERT, TMEM249, TMEM262 and EFCAB9. HSPA1 may be an additional auxiliary complex member. The core complex members CATSPER1, CATSPER2, CATSPER3 and CATSPER4 form a heterotetrameric channel. The auxiliary CATSPERB, CATSPERG, CATSPERD and CATSPERE subunits form a pavilion-like structure over the pore which stabilizes the complex through interactions with CATSPER4, CATSPER3, CATSPER1 and CATSPER2 respectively. SLCO6C1 interacts with CATSPERE and TMEM262/CATSPERH interacts with CATSPERB, further stabilizing the complex. C2CD6/CATSPERT interacts at least with CATSPERD and is required for targeting the CatSper complex in the flagellar membrane. Expressed in testis (at protein level).

It localises to the cell projection. Its subcellular location is the cilium. The protein localises to the flagellum membrane. Auxiliary component of the CatSper complex, a complex involved in sperm cell hyperactivation. Sperm cell hyperactivation is needed for sperm motility which is essential late in the preparation of sperm for fertilization. Required for CatSper complex targeting and trafficking into the quadrilinear nanodomains. Targets the preassembled CatSper complexes to elongating flagella, where it links the channel-carrying vesicles and motor proteins. The chain is Cation channel sperm-associated targeting subunit tau from Homo sapiens (Human).